The primary structure comprises 293 residues: GTP cyclohydrolase FolE2 (293 aa).

The protein belongs to the GTP cyclohydrolase IV family.

The catalysed reaction is GTP + H2O = 7,8-dihydroneopterin 3'-triphosphate + formate + H(+). The protein operates within cofactor biosynthesis; 7,8-dihydroneopterin triphosphate biosynthesis; 7,8-dihydroneopterin triphosphate from GTP: step 1/1. Converts GTP to 7,8-dihydroneopterin triphosphate. This is GTP cyclohydrolase FolE2 from Pseudomonas entomophila (strain L48).